The chain runs to 455 residues: Bifunctional protein GlmU (455 aa).

The pyrophosphorylase stretch occupies residues 1-226 (MSLDIVILAA…AMEVQGANDR (226 aa)). Residues 8-11 (LAAG), Lys-22, Gln-73, 78-79 (GT), 99-101 (YGD), Gly-136, Glu-151, Asn-166, and Asn-224 contribute to the UDP-N-acetyl-alpha-D-glucosamine site. Position 101 (Asp-101) interacts with Mg(2+). Residue Asn-224 coordinates Mg(2+). The tract at residues 227 to 247 (KQLSELERHYQMREARRLMAA) is linker. Residues 248–455 (GVTLRDPARF…WKRPVKISKD (208 aa)) form an N-acetyltransferase region. UDP-N-acetyl-alpha-D-glucosamine is bound by residues Arg-330 and Lys-348. The active-site Proton acceptor is His-360. UDP-N-acetyl-alpha-D-glucosamine is bound by residues Tyr-363 and Asn-374. Residues Ala-377, 383-384 (NY), Ser-402, Ala-420, and Arg-437 contribute to the acetyl-CoA site.

This sequence in the N-terminal section; belongs to the N-acetylglucosamine-1-phosphate uridyltransferase family. The protein in the C-terminal section; belongs to the transferase hexapeptide repeat family. As to quaternary structure, homotrimer. It depends on Mg(2+) as a cofactor.

The protein localises to the cytoplasm. It carries out the reaction alpha-D-glucosamine 1-phosphate + acetyl-CoA = N-acetyl-alpha-D-glucosamine 1-phosphate + CoA + H(+). The enzyme catalyses N-acetyl-alpha-D-glucosamine 1-phosphate + UTP + H(+) = UDP-N-acetyl-alpha-D-glucosamine + diphosphate. It functions in the pathway nucleotide-sugar biosynthesis; UDP-N-acetyl-alpha-D-glucosamine biosynthesis; N-acetyl-alpha-D-glucosamine 1-phosphate from alpha-D-glucosamine 6-phosphate (route II): step 2/2. It participates in nucleotide-sugar biosynthesis; UDP-N-acetyl-alpha-D-glucosamine biosynthesis; UDP-N-acetyl-alpha-D-glucosamine from N-acetyl-alpha-D-glucosamine 1-phosphate: step 1/1. The protein operates within bacterial outer membrane biogenesis; LPS lipid A biosynthesis. Functionally, catalyzes the last two sequential reactions in the de novo biosynthetic pathway for UDP-N-acetylglucosamine (UDP-GlcNAc). The C-terminal domain catalyzes the transfer of acetyl group from acetyl coenzyme A to glucosamine-1-phosphate (GlcN-1-P) to produce N-acetylglucosamine-1-phosphate (GlcNAc-1-P), which is converted into UDP-GlcNAc by the transfer of uridine 5-monophosphate (from uridine 5-triphosphate), a reaction catalyzed by the N-terminal domain. This is Bifunctional protein GlmU from Pseudomonas syringae pv. syringae (strain B728a).